The chain runs to 131 residues: Glycine cleavage system H protein (131 aa).

The region spanning threonine 24 to glutamine 106 is the Lipoyl-binding domain. Lysine 65 is modified (N6-lipoyllysine).

It belongs to the GcvH family. In terms of assembly, the glycine cleavage system is composed of four proteins: P, T, L and H. The cofactor is (R)-lipoate.

In terms of biological role, the glycine cleavage system catalyzes the degradation of glycine. The H protein shuttles the methylamine group of glycine from the P protein to the T protein. The sequence is that of Glycine cleavage system H protein from Mycobacterium sp. (strain JLS).